The following is a 629-amino-acid chain: 1-deoxy-D-xylulose-5-phosphate synthase (629 aa).

Thiamine diphosphate is bound by residues H72 and 113–115; that span reads GHA. D144 contacts Mg(2+). Residues 145 to 146, N174, Y287, and E370 contribute to the thiamine diphosphate site; that span reads GA. N174 is a binding site for Mg(2+).

It belongs to the transketolase family. DXPS subfamily. Homodimer. It depends on Mg(2+) as a cofactor. Thiamine diphosphate serves as cofactor.

It catalyses the reaction D-glyceraldehyde 3-phosphate + pyruvate + H(+) = 1-deoxy-D-xylulose 5-phosphate + CO2. It functions in the pathway metabolic intermediate biosynthesis; 1-deoxy-D-xylulose 5-phosphate biosynthesis; 1-deoxy-D-xylulose 5-phosphate from D-glyceraldehyde 3-phosphate and pyruvate: step 1/1. Its function is as follows. Catalyzes the acyloin condensation reaction between C atoms 2 and 3 of pyruvate and glyceraldehyde 3-phosphate to yield 1-deoxy-D-xylulose-5-phosphate (DXP). This Prochlorococcus marinus (strain MIT 9301) protein is 1-deoxy-D-xylulose-5-phosphate synthase.